A 490-amino-acid chain; its full sequence is MTAFRFDNSYARLPANFYARVQPTPVAEPWLIKLNRPLAGELGLDAEALERDGAAIFSGNLVPEGAEPLAMAYAGHQFGTFVPQLGDGRAILLGEVTDAGGRRRDIQLKGAGQTPYSRRGDGRAALGPVLREYIVSEAMHALGVPTTRALAATATGQPVYREQILPGAVFTRVAASHIRVGTFQFFAARGDMESIRTLADYVIGRHYPELKTDEKPYLALLKAVAARQAALIARWLHVGFIHGVMNTDNMTISGETIDFGPCAFMDDYDPKTVFSSIDQFGRYAYANQPAIGQWNLARLAETLVTLFDPVADTAVNLANDALGEYGTIFQKHWLDGMRRKIGLLTDEDEDLDLVQSLLTLMQNGKADFTLTFRRLAASAENATADTELASLFEEPQALSPWLEHWRRRLEREPQPATERAAAMRSVNPAFIPRNHRVEQAIAAATEDADFSLFEALLDVTSRPYEDQPGHAAYAAPPEPGEEVLQTFCGT.

G86, G88, R89, K109, D121, G122, R172, and R179 together coordinate ATP. The active-site Proton acceptor is D248. Mg(2+)-binding residues include N249 and D258. D258 is a binding site for ATP.

It belongs to the SELO family. The cofactor is Mg(2+). Mn(2+) serves as cofactor.

The catalysed reaction is L-seryl-[protein] + ATP = 3-O-(5'-adenylyl)-L-seryl-[protein] + diphosphate. It catalyses the reaction L-threonyl-[protein] + ATP = 3-O-(5'-adenylyl)-L-threonyl-[protein] + diphosphate. It carries out the reaction L-tyrosyl-[protein] + ATP = O-(5'-adenylyl)-L-tyrosyl-[protein] + diphosphate. The enzyme catalyses L-histidyl-[protein] + UTP = N(tele)-(5'-uridylyl)-L-histidyl-[protein] + diphosphate. The catalysed reaction is L-seryl-[protein] + UTP = O-(5'-uridylyl)-L-seryl-[protein] + diphosphate. It catalyses the reaction L-tyrosyl-[protein] + UTP = O-(5'-uridylyl)-L-tyrosyl-[protein] + diphosphate. In terms of biological role, nucleotidyltransferase involved in the post-translational modification of proteins. It can catalyze the addition of adenosine monophosphate (AMP) or uridine monophosphate (UMP) to a protein, resulting in modifications known as AMPylation and UMPylation. This Rhizobium meliloti (strain 1021) (Ensifer meliloti) protein is Protein nucleotidyltransferase YdiU.